The chain runs to 332 residues: Glycerol-3-phosphate dehydrogenase [NAD(P)+] (332 aa).

NADPH contacts are provided by serine 11, phenylalanine 12, lysine 32, and lysine 106. 3 residues coordinate sn-glycerol 3-phosphate: lysine 106, glycine 137, and serine 139. An NADPH-binding site is contributed by alanine 141. Residues lysine 192, aspartate 245, serine 255, arginine 256, and asparagine 257 each coordinate sn-glycerol 3-phosphate. The Proton acceptor role is filled by lysine 192. Arginine 256 provides a ligand contact to NADPH. The NADPH site is built by valine 280 and glutamate 282.

The protein belongs to the NAD-dependent glycerol-3-phosphate dehydrogenase family.

It is found in the cytoplasm. The catalysed reaction is sn-glycerol 3-phosphate + NAD(+) = dihydroxyacetone phosphate + NADH + H(+). The enzyme catalyses sn-glycerol 3-phosphate + NADP(+) = dihydroxyacetone phosphate + NADPH + H(+). The protein operates within membrane lipid metabolism; glycerophospholipid metabolism. In terms of biological role, catalyzes the reduction of the glycolytic intermediate dihydroxyacetone phosphate (DHAP) to sn-glycerol 3-phosphate (G3P), the key precursor for phospholipid synthesis. This chain is Glycerol-3-phosphate dehydrogenase [NAD(P)+], found in Staphylococcus epidermidis (strain ATCC 35984 / DSM 28319 / BCRC 17069 / CCUG 31568 / BM 3577 / RP62A).